Here is a 944-residue protein sequence, read N- to C-terminus: Spindle pole body component 110 (944 aa).

Thr18 is modified (phosphothreonine). The interval 23–110 is disordered; it reads IKSKRNTTQT…RKRNLIDDLK (88 aa). The segment covering 28 to 46 has biased composition (polar residues); sequence NTTQTQVVSPTKVPNANNG. The short motif at 54-59 is the Nuclear localization signal element; it reads KKRQRR. At Ser60 the chain carries Phosphoserine; by MPS1. Residues Thr64 and Thr68 each carry the phosphothreonine; by MPS1 modification. Over residues 67–78 the composition is skewed to polar residues; that stretch reads STRLFSEASQFD. Phosphoserine is present on Ser80. Residues 96-110 are compositionally biased toward basic and acidic residues; sequence NVDKSRKRNLIDDLK. Residues 164 to 791 adopt a coiled-coil conformation; sequence EIKSLKHEIK…NRRLEERLIL (628 aa). Position 529 is a phosphoserine (Ser529). Short sequence motifs (nuclear localization signal) lie at residues 726–731 and 742–747; these read KEKYKR and RLRREK. A calmodulin-binding region spans residues 900 to 927; the sequence is SFKTVALLVLACVRMKRIAFYRRSDDNR.

This sequence belongs to the SPC110 family. In terms of assembly, homodimer. Component of the SPC110 complex containing at least CMD1, SPC29 and SCP110. Interacts with SPC97 and SPC98.

The protein localises to the nucleus. The protein resides in the cytoplasm. Its subcellular location is the cytoskeleton. It localises to the microtubule organizing center. It is found in the spindle pole body. In terms of biological role, component of the spindle pole body (SPB) required for the proper execution of spindle pole body (SPB) duplication. Potential role in cross-linking filaments or anchoring other molecules. It is essential for growth. The polypeptide is Spindle pole body component 110 (SPC110) (Saccharomyces cerevisiae (strain ATCC 204508 / S288c) (Baker's yeast)).